We begin with the raw amino-acid sequence, 204 residues long: Ribosomal RNA small subunit methyltransferase G (204 aa).

S-adenosyl-L-methionine-binding residues include Gly73, Phe78, and Arg139.

The protein belongs to the methyltransferase superfamily. RNA methyltransferase RsmG family.

The protein localises to the cytoplasm. It catalyses the reaction guanosine(527) in 16S rRNA + S-adenosyl-L-methionine = N(7)-methylguanosine(527) in 16S rRNA + S-adenosyl-L-homocysteine. Its function is as follows. Specifically methylates the N7 position of guanine in position 527 of 16S rRNA. The protein is Ribosomal RNA small subunit methyltransferase G of Coxiella burnetii (strain CbuG_Q212) (Coxiella burnetii (strain Q212)).